A 124-amino-acid chain; its full sequence is MQRTYTVTIPSFEPALTVFMLVKTSPEWLGFPVERRFALLEEQFTPILRKHAAHVTLRFFDVEFYATRVTDLWMWDARDHHSYQLLVEDLRETAFWDRYFEIVEILPGVENAYARNYGRPAINA.

This sequence belongs to the darcynin family.

The sequence is that of Darcynin homolog from Granulibacter bethesdensis (strain ATCC BAA-1260 / CGDNIH1).